The following is a 450-amino-acid chain: Putative serine/threonine-protein kinase R517/R518 (450 aa).

A Protein kinase domain is found at lysine 9–phenylalanine 290. Residues leucine 15–valine 23 and lysine 38 contribute to the ATP site. Residue aspartate 140 is the Proton acceptor of the active site.

It belongs to the protein kinase superfamily. Ser/Thr protein kinase family.

The enzyme catalyses L-seryl-[protein] + ATP = O-phospho-L-seryl-[protein] + ADP + H(+). It catalyses the reaction L-threonyl-[protein] + ATP = O-phospho-L-threonyl-[protein] + ADP + H(+). The chain is Putative serine/threonine-protein kinase R517/R518 from Acanthamoeba polyphaga mimivirus (APMV).